We begin with the raw amino-acid sequence, 193 residues long: Orotate phosphoribosyltransferase (193 aa).

Glu-114 to Ser-122 is a binding site for 5-phospho-alpha-D-ribose 1-diphosphate. Residues Thr-118 and Arg-146 each coordinate orotate.

It belongs to the purine/pyrimidine phosphoribosyltransferase family. PyrE subfamily. In terms of assembly, homodimer. Mg(2+) serves as cofactor.

The catalysed reaction is orotidine 5'-phosphate + diphosphate = orotate + 5-phospho-alpha-D-ribose 1-diphosphate. The protein operates within pyrimidine metabolism; UMP biosynthesis via de novo pathway; UMP from orotate: step 1/2. Functionally, catalyzes the transfer of a ribosyl phosphate group from 5-phosphoribose 1-diphosphate to orotate, leading to the formation of orotidine monophosphate (OMP). The chain is Orotate phosphoribosyltransferase from Chlorobium phaeobacteroides (strain BS1).